The following is a 306-amino-acid chain: Tyrosine recombinase XerC (306 aa).

A Core-binding (CB) domain is found at 10–94 (ARCHSYLQQF…AVKQWGEFLL (85 aa)). The Tyr recombinase domain maps to 115–294 (PLPKNIDVDS…DFQHLAKVYD (180 aa)). Residues arginine 154, lysine 178, histidine 246, arginine 249, and histidine 272 contribute to the active site. Tyrosine 281 serves as the catalytic O-(3'-phospho-DNA)-tyrosine intermediate.

The protein belongs to the 'phage' integrase family. XerC subfamily. As to quaternary structure, forms a cyclic heterotetrameric complex composed of two molecules of XerC and two molecules of XerD.

The protein localises to the cytoplasm. Site-specific tyrosine recombinase, which acts by catalyzing the cutting and rejoining of the recombining DNA molecules. The XerC-XerD complex is essential to convert dimers of the bacterial chromosome into monomers to permit their segregation at cell division. It also contributes to the segregational stability of plasmids. This is Tyrosine recombinase XerC from Shewanella oneidensis (strain ATCC 700550 / JCM 31522 / CIP 106686 / LMG 19005 / NCIMB 14063 / MR-1).